A 460-amino-acid polypeptide reads, in one-letter code: ATP synthase subunit beta (460 aa).

Position 150-157 (150-157 (GGAGVGKT)) interacts with ATP.

This sequence belongs to the ATPase alpha/beta chains family. F-type ATPases have 2 components, CF(1) - the catalytic core - and CF(0) - the membrane proton channel. CF(1) has five subunits: alpha(3), beta(3), gamma(1), delta(1), epsilon(1). CF(0) has three main subunits: a(1), b(2) and c(9-12). The alpha and beta chains form an alternating ring which encloses part of the gamma chain. CF(1) is attached to CF(0) by a central stalk formed by the gamma and epsilon chains, while a peripheral stalk is formed by the delta and b chains.

The protein resides in the cell inner membrane. The enzyme catalyses ATP + H2O + 4 H(+)(in) = ADP + phosphate + 5 H(+)(out). In terms of biological role, produces ATP from ADP in the presence of a proton gradient across the membrane. The catalytic sites are hosted primarily by the beta subunits. The chain is ATP synthase subunit beta from Yersinia enterocolitica serotype O:8 / biotype 1B (strain NCTC 13174 / 8081).